The sequence spans 136 residues: Putative pre-16S rRNA nuclease (136 aa).

Belongs to the YqgF nuclease family.

The protein resides in the cytoplasm. Could be a nuclease involved in processing of the 5'-end of pre-16S rRNA. In Francisella tularensis subsp. holarctica (strain FTNF002-00 / FTA), this protein is Putative pre-16S rRNA nuclease.